The primary structure comprises 307 residues: UDP-N-acetylenolpyruvoylglucosamine reductase (307 aa).

Residues T33–G197 form the FAD-binding PCMH-type domain. R176 is an active-site residue. The active-site Proton donor is the S226. E296 is a catalytic residue.

This sequence belongs to the MurB family. It depends on FAD as a cofactor.

It localises to the cytoplasm. It catalyses the reaction UDP-N-acetyl-alpha-D-muramate + NADP(+) = UDP-N-acetyl-3-O-(1-carboxyvinyl)-alpha-D-glucosamine + NADPH + H(+). The protein operates within cell wall biogenesis; peptidoglycan biosynthesis. Cell wall formation. This is UDP-N-acetylenolpyruvoylglucosamine reductase from Staphylococcus aureus (strain COL).